Reading from the N-terminus, the 198-residue chain is MSKVLILKSSILGGYSQSAVLIDHLASHWENQGAAITVRDLGGKDVLPMVDGEIASGLRGGAELSARQQEMLALSDTLVAELKANDTIVIAAPMYNFTIPAQLKNWIDFIARAGVTFTYTETGSKGLVEGKRAVLVTTRGGAHKDGPTDHVVPYLKTVLAFIGITNVEVVYAEALNMGPEAHDKGMSEAKHSIDLLTA.

Residues serine 10, 16-18 (SQS), 94-97 (MYNF), and 138-141 (TRGG) each bind FMN.

The protein belongs to the azoreductase type 1 family. In terms of assembly, homodimer. It depends on FMN as a cofactor.

The catalysed reaction is 2 a quinone + NADH + H(+) = 2 a 1,4-benzosemiquinone + NAD(+). It carries out the reaction N,N-dimethyl-1,4-phenylenediamine + anthranilate + 2 NAD(+) = 2-(4-dimethylaminophenyl)diazenylbenzoate + 2 NADH + 2 H(+). Its function is as follows. Quinone reductase that provides resistance to thiol-specific stress caused by electrophilic quinones. Functionally, also exhibits azoreductase activity. Catalyzes the reductive cleavage of the azo bond in aromatic azo compounds to the corresponding amines. This Shewanella putrefaciens (strain CN-32 / ATCC BAA-453) protein is FMN-dependent NADH:quinone oxidoreductase.